Reading from the N-terminus, the 267-residue chain is Oxidoreductase ordB (267 aa).

The protein belongs to the avfA family.

The protein operates within mycotoxin biosynthesis. Its function is as follows. Oxidoreductase; part of the fragmented gene cluster that mediates the biosynthesis of dothistromin (DOTH), a polyketide toxin very similar in structure to the aflatoxin precursor, versicolorin B. The first step of the pathway is the conversion of acetate to norsolorinic acid (NOR) and requires the fatty acid synthase subunits hexA and hexB, as well as the polyketide synthase pksA. PksA combines a hexanoyl starter unit and 7 malonyl-CoA extender units to synthesize the precursor NOR. The hexanoyl starter unit is provided to the acyl-carrier protein (ACP) domain by the fungal fatty acid synthase hexA/hexB. The second step is the conversion of NOR to averantin (AVN) and requires the norsolorinic acid ketoreductase nor1, which catalyzes the dehydration of norsolorinic acid to form (1'S)-averantin. The cytochrome P450 monooxygenase avnA then catalyzes the hydroxylation of AVN to 5'hydroxyaverantin (HAVN). The next step is performed by adhA that transforms HAVN to averufin (AVF). Averufin might then be converted to hydroxyversicolorone by cypX and avfA. Hydroxyversicolorone is further converted versiconal hemiacetal acetate (VHA) by moxY. VHA is then the substrate for the versiconal hemiacetal acetate esterase est1 to yield versiconal (VAL). Versicolorin B synthase vbsA then converts VAL to versicolorin B (VERB) by closing the bisfuran ring. Then, the activity of the versicolorin B desaturase verB leads to versicolorin A (VERA). DotB, a predicted chloroperoxidase, may perform epoxidation of the A-ring of VERA. Alternatively, a cytochrome P450, such as cypX or avnA could catalyze this step. It is also possible that another, uncharacterized, cytochrome P450 enzyme is responsible for this step. Opening of the epoxide could potentially be achieved by the epoxide hydrolase epoA. However, epoA seems not to be required for DOTH biosynthesis, but other epoxide hydrolases may have the ability to complement this hydrolysis. Alternatively, opening of the epoxide ring could be achieved non-enzymatically. The next step is the deoxygenation of ring A to yield the 5,8-dihydroxyanthraquinone which is most likely catalyzed by the NADPH dehydrogenase encoded by ver1. The last stages of DOTH biosynthesis are proposed to involve hydroxylation of the bisfuran. OrdB and norB might have oxidative roles here. An alternative possibility is that cytochrome P450 monoogenases such as avnA and cypX might perform these steps in addition to previously proposed steps. This is Oxidoreductase ordB from Dothistroma septosporum (strain NZE10 / CBS 128990) (Red band needle blight fungus).